The following is a 361-amino-acid chain: Queuine tRNA-ribosyltransferase (361 aa).

Residue D92 is the Proton acceptor of the active site. Substrate contacts are provided by residues 92-96 (DSGGF), D146, Q189, and G216. The segment at 247–253 (GVGKPAD) is RNA binding. The Nucleophile role is filled by D266. Residues 271 to 275 (TRSGR) form an RNA binding; important for wobble base 34 recognition region. Zn(2+) is bound by residues C304, C306, C309, and H335.

It belongs to the queuine tRNA-ribosyltransferase family. As to quaternary structure, homodimer. Within each dimer, one monomer is responsible for RNA recognition and catalysis, while the other monomer binds to the replacement base PreQ1. It depends on Zn(2+) as a cofactor.

The catalysed reaction is 7-aminomethyl-7-carbaguanine + guanosine(34) in tRNA = 7-aminomethyl-7-carbaguanosine(34) in tRNA + guanine. It participates in tRNA modification; tRNA-queuosine biosynthesis. Catalyzes the base-exchange of a guanine (G) residue with the queuine precursor 7-aminomethyl-7-deazaguanine (PreQ1) at position 34 (anticodon wobble position) in tRNAs with GU(N) anticodons (tRNA-Asp, -Asn, -His and -Tyr). Catalysis occurs through a double-displacement mechanism. The nucleophile active site attacks the C1' of nucleotide 34 to detach the guanine base from the RNA, forming a covalent enzyme-RNA intermediate. The proton acceptor active site deprotonates the incoming PreQ1, allowing a nucleophilic attack on the C1' of the ribose to form the product. After dissociation, two additional enzymatic reactions on the tRNA convert PreQ1 to queuine (Q), resulting in the hypermodified nucleoside queuosine (7-(((4,5-cis-dihydroxy-2-cyclopenten-1-yl)amino)methyl)-7-deazaguanosine). The chain is Queuine tRNA-ribosyltransferase from Rickettsia bellii (strain OSU 85-389).